Consider the following 309-residue polypeptide: Tumor necrosis factor ligand superfamily member 13B (309 aa).

Residues 1-47 (MDESAKTLPPPCLCFCSEKGEDMKVGYDPITPQKEEGAWFGICRDGR) are Cytoplasmic-facing. Residues 48–68 (LLAATLLLALLSSSFTAMSLY) form a helical; Signal-anchor for type II membrane protein membrane-spanning segment. Residues 69-309 (QLAALQADLM…DTFFGALKLL (241 aa)) are Extracellular-facing. The segment at 110-140 (PAAPRPHNSSRGHRNRRAFQGPEETEQDVDL) is disordered. Asparagine 117 and asparagine 266 each carry an N-linked (GlcNAc...) asparagine glycan. Over residues 117–126 (NSSRGHRNRR) the composition is skewed to basic residues. The THD domain maps to 169–308 (DCLQLIADSD…DDTFFGALKL (140 aa)). Residues cysteine 256 and cysteine 269 are joined by a disulfide bond.

It belongs to the tumor necrosis factor family. In terms of assembly, homotrimer. Isoform 2 heteromultimerizes with isoform 1, probably limiting the amount of functional isoform 1 on the cell surface. Post-translationally, the soluble form derives from the membrane form by proteolytic processing. In terms of processing, isoform 2 is not efficiently shed from the membrane unlike isoform 1. In terms of tissue distribution, isoform 2 is expressed in many myeloid cell lines.

It localises to the cell membrane. The protein localises to the secreted. Functionally, cytokine that binds to TNFRSF13B/TACI and TNFRSF17/BCMA. TNFSF13/APRIL binds to the same 2 receptors. Together, they form a 2 ligands -2 receptors pathway involved in the stimulation of B- and T-cell function and the regulation of humoral immunity. A third B-cell specific BAFF-receptor (BAFFR/BR3) promotes the survival of mature B-cells and the B-cell response. Isoform 2 seems to inhibit isoform 1 secretion and bioactivity. The sequence is that of Tumor necrosis factor ligand superfamily member 13B (Tnfsf13b) from Mus musculus (Mouse).